Consider the following 339-residue polypeptide: Phosphate acyltransferase (339 aa).

The protein belongs to the PlsX family. As to quaternary structure, homodimer. Probably interacts with PlsY.

It is found in the cytoplasm. The enzyme catalyses a fatty acyl-[ACP] + phosphate = an acyl phosphate + holo-[ACP]. Its pathway is lipid metabolism; phospholipid metabolism. Functionally, catalyzes the reversible formation of acyl-phosphate (acyl-PO(4)) from acyl-[acyl-carrier-protein] (acyl-ACP). This enzyme utilizes acyl-ACP as fatty acyl donor, but not acyl-CoA. The chain is Phosphate acyltransferase from Helicobacter pylori (strain J99 / ATCC 700824) (Campylobacter pylori J99).